The chain runs to 109 residues: UPF0122 protein CLL_A1244 (109 aa).

This sequence belongs to the UPF0122 family.

Functionally, might take part in the signal recognition particle (SRP) pathway. This is inferred from the conservation of its genetic proximity to ftsY/ffh. May be a regulatory protein. This chain is UPF0122 protein CLL_A1244, found in Clostridium botulinum (strain Eklund 17B / Type B).